Reading from the N-terminus, the 189-residue chain is MLLSDRDLRAEISAGRLGIDPFDDSMVQPSSVDVRLDSLFRVFNNTRYTHIDPAQRQDELTTLVEPAEGEPFVLHPGEFVLGSTLEVCSLPDDLAGRLEGKSSLGRLGLLTHSTAGFIDPGFNGHITLELSNVANLPITLWPGMKIGQLCLLRLSSAAEHPYGSSAVGSKYQGQRGPTPSKAYLNFAQS.

DCTP-binding positions include 101-106 (KSSLGR), D119, 127-129 (TLE), Q148, Y162, and Q174. E129 (proton donor/acceptor) is an active-site residue.

Belongs to the dCTP deaminase family. As to quaternary structure, homotrimer.

The enzyme catalyses dCTP + 2 H2O = dUMP + NH4(+) + diphosphate. It functions in the pathway pyrimidine metabolism; dUMP biosynthesis; dUMP from dCTP: step 1/1. Functionally, bifunctional enzyme that catalyzes both the deamination of dCTP to dUTP and the hydrolysis of dUTP to dUMP without releasing the toxic dUTP intermediate. The protein is dCTP deaminase, dUMP-forming of Rhodococcus jostii (strain RHA1).